The sequence spans 392 residues: Putative cystathionine gamma-lyase (392 aa).

Residues 1–10 (MSDSATTDSA) show a composition bias toward polar residues. The segment at 1–41 (MSDSATTDSAGTGGERSASAPGDGTRAVRAGLPEPVKHEPT) is disordered. K216 carries the N6-(pyridoxal phosphate)lysine modification.

Belongs to the trans-sulfuration enzymes family. Pyridoxal 5'-phosphate is required as a cofactor.

The protein localises to the cytoplasm. It catalyses the reaction L,L-cystathionine + H2O = 2-oxobutanoate + L-cysteine + NH4(+). It participates in amino-acid biosynthesis; L-cysteine biosynthesis; L-cysteine from L-homocysteine and L-serine: step 2/2. The sequence is that of Putative cystathionine gamma-lyase (cysA) from Streptomyces coelicolor (strain ATCC BAA-471 / A3(2) / M145).